Reading from the N-terminus, the 348-residue chain is Lipoyl synthase (348 aa).

The tract at residues 1 to 45 is disordered; it reads MSESAKPRITSGSKFRNEHGFSAIKDGVKRSSSNTEGKSLERKPK. 7 residues coordinate [4Fe-4S] cluster: C73, C78, C84, C99, C103, C106, and S314. One can recognise a Radical SAM core domain in the interval 85–303; it reads WTNGTATIMV…RDIGLEKGFM (219 aa).

It belongs to the radical SAM superfamily. Lipoyl synthase family. Requires [4Fe-4S] cluster as cofactor.

Its subcellular location is the cytoplasm. It carries out the reaction [[Fe-S] cluster scaffold protein carrying a second [4Fe-4S](2+) cluster] + N(6)-octanoyl-L-lysyl-[protein] + 2 oxidized [2Fe-2S]-[ferredoxin] + 2 S-adenosyl-L-methionine + 4 H(+) = [[Fe-S] cluster scaffold protein] + N(6)-[(R)-dihydrolipoyl]-L-lysyl-[protein] + 4 Fe(3+) + 2 hydrogen sulfide + 2 5'-deoxyadenosine + 2 L-methionine + 2 reduced [2Fe-2S]-[ferredoxin]. It participates in protein modification; protein lipoylation via endogenous pathway; protein N(6)-(lipoyl)lysine from octanoyl-[acyl-carrier-protein]: step 2/2. Catalyzes the radical-mediated insertion of two sulfur atoms into the C-6 and C-8 positions of the octanoyl moiety bound to the lipoyl domains of lipoate-dependent enzymes, thereby converting the octanoylated domains into lipoylated derivatives. In Marinobacter nauticus (strain ATCC 700491 / DSM 11845 / VT8) (Marinobacter aquaeolei), this protein is Lipoyl synthase.